Here is a 330-residue protein sequence, read N- to C-terminus: MRALLPLLSVGRGWRVGAAARPPRRVMSLYRTEELGHPRSQDYRLFFKHVAGHYISPFHDIPLKADCKEEHDIPRKKARNDEYENLFNMVVEIPRWTNAKMEIATEEPLNPIKQDIKNGKLRYTPNIFPHKGYIWNYGALPQTWEDPHLRDKSTDCCGDNDPIDVCEIGSKVLSRGDVVHVKILGTLALIDQSETDWKIIAINVNDPEAEKFHDIDDVKKFKPGYLEATLNWFRLYKVPDGKPENKFAFNGEFKNKAFALDVINSAHERWKEMVMKKCDKGAISCVNVHICDSPFHCTMEEARSLVESVPTPSMNKESNVEEEVWHFLRN.

The transit peptide at 1 to 27 (MRALLPLLSVGRGWRVGAAARPPRRVM) directs the protein to the mitochondrion. Mg(2+) is bound by residues D159, D164, and D196. K211 is subject to N6-succinyllysine. K219 bears the N6-acetyllysine mark. An N6-succinyllysine modification is found at K254. Residue K256 is modified to N6-acetyllysine.

Belongs to the PPase family. Homodimer. The cofactor is Mg(2+).

It localises to the mitochondrion. It catalyses the reaction diphosphate + H2O = 2 phosphate + H(+). Hydrolyzes inorganic pyrophosphate. This activity is essential for correct regulation of mitochondrial membrane potential, and mitochondrial organization and function. The sequence is that of Inorganic pyrophosphatase 2, mitochondrial (Ppa2) from Mus musculus (Mouse).